The chain runs to 100 residues: uncharacterized protein (100 aa).

The protein belongs to the csb family.

This is an uncharacterized protein from Dictyostelium discoideum (Social amoeba).